The primary structure comprises 417 residues: Serine hydroxymethyltransferase (417 aa).

(6S)-5,6,7,8-tetrahydrofolate-binding positions include leucine 122 and 126-128 (GHL). Residue lysine 230 is modified to N6-(pyridoxal phosphate)lysine. 355 to 357 (SPF) is a binding site for (6S)-5,6,7,8-tetrahydrofolate.

It belongs to the SHMT family. Homodimer. Pyridoxal 5'-phosphate is required as a cofactor.

The protein resides in the cytoplasm. It catalyses the reaction (6R)-5,10-methylene-5,6,7,8-tetrahydrofolate + glycine + H2O = (6S)-5,6,7,8-tetrahydrofolate + L-serine. The protein operates within one-carbon metabolism; tetrahydrofolate interconversion. It functions in the pathway amino-acid biosynthesis; glycine biosynthesis; glycine from L-serine: step 1/1. Its function is as follows. Catalyzes the reversible interconversion of serine and glycine with tetrahydrofolate (THF) serving as the one-carbon carrier. This reaction serves as the major source of one-carbon groups required for the biosynthesis of purines, thymidylate, methionine, and other important biomolecules. Also exhibits THF-independent aldolase activity toward beta-hydroxyamino acids, producing glycine and aldehydes, via a retro-aldol mechanism. The sequence is that of Serine hydroxymethyltransferase from Francisella philomiragia subsp. philomiragia (strain ATCC 25017 / CCUG 19701 / FSC 153 / O#319-036).